The chain runs to 176 residues: Inner membrane-spanning protein YciB (176 aa).

5 helical membrane passes run Thr24 to His44, Pro49 to His69, Trp76 to Phe96, Tyr121 to Phe141, and Phe149 to Leu169.

Belongs to the YciB family.

Its subcellular location is the cell inner membrane. Its function is as follows. Plays a role in cell envelope biogenesis, maintenance of cell envelope integrity and membrane homeostasis. In Paraburkholderia phymatum (strain DSM 17167 / CIP 108236 / LMG 21445 / STM815) (Burkholderia phymatum), this protein is Inner membrane-spanning protein YciB.